Here is a 162-residue protein sequence, read N- to C-terminus: 18.5 kDa class IV heat shock protein (162 aa).

A sHSP domain is found at 53-149 (TSSSTVNTQL…PPQLPEIEEN (97 aa)).

It belongs to the small heat shock protein (HSP20) family. In terms of assembly, may form oligomeric structures.

The protein resides in the cytoplasm. The protein is 18.5 kDa class IV heat shock protein (HSP18.5) of Arabidopsis thaliana (Mouse-ear cress).